The primary structure comprises 284 residues: Non-selective voltage-gated ion channel VDAC3 (284 aa).

Cys-2 is modified (N-acetylcysteine). Residue Thr-4 is modified to Phosphothreonine. 3 positions are modified to N6-acetyllysine: Lys-12, Lys-15, and Lys-20. Beta stranded transmembrane passes span 26-35 (MVKIDLKTKS) and 39-48 (VMEFSTSGHA). Lys-54 participates in a covalent cross-link: Glycyl lysine isopeptide (Lys-Gly) (interchain with G-Cter in ubiquitin). 3 beta stranded membrane passes run 55 to 65 (ASGNLETKYKV), 70 to 77 (LTFTQKWN), and 81 to 90 (TLGTEISWEN). Lys-91 is modified (N6-acetyllysine). Residues 96-105 (LKLTLDTIFV) traverse the membrane as a beta stranded segment. Glycyl lysine isopeptide (Lys-Gly) (interchain with G-Cter in ubiquitin) cross-links involve residues Lys-110 and Lys-111. The next 10 membrane-spanning stretches (beta stranded) occupy residues 112–121 (SGKLKASYKR), 124–131 (FSVGSNVD), 138–146 (TIYGWAVLA), 151–159 (LAGYQMSFD), 164–176 (KLSQNNFALGYKA), 179–186 (FQLHTHVN), 190–199 (EFGGSIYQKV), 203–212 (IETSINLAWT), 219–228 (RFGIAAKYML), and 232–239 (TSLSAKVN). Ser-242 carries the phosphoserine modification. Residues 243–245 (LIG) and 261–265 (SALID) contribute to the NAD(+) site. Transmembrane regions (beta stranded) follow at residues 243 to 252 (LIGLGYTQTL) and 255 to 264 (GVKLTLSALI). Lys-267 carries the post-translational modification N6-acetyllysine; alternate. A Glycyl lysine isopeptide (Lys-Gly) (interchain with G-Cter in ubiquitin); alternate cross-link involves residue Lys-267. A beta stranded transmembrane segment spans residues 274–283 (HKVGLGFELE).

This sequence belongs to the eukaryotic mitochondrial porin family. Interacts with ARMC12 in a TBC1D21-dependent manner. Interacts with MISFA. Ubiquitinated by PRKN during mitophagy, leading to its degradation and enhancement of mitophagy. Deubiquitinated by USP30.

It localises to the mitochondrion outer membrane. The protein resides in the membrane. The catalysed reaction is chloride(in) = chloride(out). It carries out the reaction K(+)(in) = K(+)(out). In terms of biological role, non-selective voltage-gated ion channel that mediates the transport of anions and cations through the mitochondrion outer membrane and plasma membrane. Forms a high-conducting channel with a stable open state and a voltage-induced closure with a mild preference for anions over cations. Involved in male fertility and sperm mitochondrial sheath formation. The protein is Non-selective voltage-gated ion channel VDAC3 of Pongo abelii (Sumatran orangutan).